The sequence spans 337 residues: MSQPPAAHVPVLYTQVLDGLQVTENGTYLDGTFGRGGHARGVLEHLGPGGRLLVMDKDPDAIAVAEQTFGGDARVSIHRGSFAGLGQVVAAATVDGILLDLGVSSPQLDVAGRGFSFGKDGPLDMRMDPDSGQSAAQWLAQATDREIADVLWAYGEERQSRRIARAIVARRAEQPLLRTAQLADLIASVMPRGDSKTHPATRSFQAIRIYINRELDDLETGLDAALAALKPGGRLAVISFHSLEDRIVKQFMARYAKAPPSNRRLPEAQPFVPTLQLVSGAIKADDTELNVNPRARSAVLRVAEKLELGIGDSGLERRSGRIPNPRSPIPASQGDAR.

S-adenosyl-L-methionine is bound by residues 36-38, Asp56, Phe82, Asp100, and Gln107; that span reads GGH. Positions 314-337 are disordered; the sequence is GLERRSGRIPNPRSPIPASQGDAR.

It belongs to the methyltransferase superfamily. RsmH family.

Its subcellular location is the cytoplasm. The catalysed reaction is cytidine(1402) in 16S rRNA + S-adenosyl-L-methionine = N(4)-methylcytidine(1402) in 16S rRNA + S-adenosyl-L-homocysteine + H(+). Functionally, specifically methylates the N4 position of cytidine in position 1402 (C1402) of 16S rRNA. This chain is Ribosomal RNA small subunit methyltransferase H, found in Xanthomonas oryzae pv. oryzae (strain PXO99A).